The following is a 212-amino-acid chain: Adenylate kinase (212 aa).

14–19 (GSGKGT) contributes to the ATP binding site. Residues 34–63 (STGDLFRKKISEDSQFAAQIQNYLSSGSYV) form an NMP region. Residues T35, R40, 61–63 (SYV), 89–92 (GYPR), and Q96 each bind AMP. The interval 126–163 (QRLFCQKCQKSYNLLLAKPKNELKCDLDSTDLITRNDD) is LID. Residue R127 participates in ATP binding. Residues C130 and C133 each coordinate Zn(2+). ATP is bound at residue 136–137 (SY). Residues C150 and D153 each coordinate Zn(2+). R160 and R171 together coordinate AMP. Position 199 (Q199) interacts with ATP.

It belongs to the adenylate kinase family. As to quaternary structure, monomer.

It is found in the cytoplasm. It catalyses the reaction AMP + ATP = 2 ADP. Its pathway is purine metabolism; AMP biosynthesis via salvage pathway; AMP from ADP: step 1/1. Catalyzes the reversible transfer of the terminal phosphate group between ATP and AMP. Plays an important role in cellular energy homeostasis and in adenine nucleotide metabolism. The protein is Adenylate kinase of Mesomycoplasma hyopneumoniae (strain J / ATCC 25934 / NCTC 10110) (Mycoplasma hyopneumoniae).